A 179-amino-acid polypeptide reads, in one-letter code: Gut granule loss protein 3 (179 aa).

The tract at residues 40 to 59 (DLDSASSGVGSSTCTEEQES) is disordered. Residues 42-54 (DSASSGVGSSTCT) are compositionally biased toward polar residues.

The protein is Gut granule loss protein 3 (glo-3) of Caenorhabditis elegans.